The sequence spans 139 residues: ATP synthase epsilon chain (139 aa).

This sequence belongs to the ATPase epsilon chain family. In terms of assembly, F-type ATPases have 2 components, CF(1) - the catalytic core - and CF(0) - the membrane proton channel. CF(1) has five subunits: alpha(3), beta(3), gamma(1), delta(1), epsilon(1). CF(0) has three main subunits: a, b and c.

It localises to the cell inner membrane. Produces ATP from ADP in the presence of a proton gradient across the membrane. In Nitrosospira multiformis (strain ATCC 25196 / NCIMB 11849 / C 71), this protein is ATP synthase epsilon chain.